The primary structure comprises 502 residues: MELKMEEISEYLKKQIADFEKKADVSEVGIVTSIGDGVARIYGLDNCMASEMLELPNGVYGMALNLEEDNVGAILFGDDRLVKEGDLVKRTGRVMETPVGEELIGRVVNAIGIPIDGKGPINAKTSRKVDVIAPGIIKRQPVKEPLQTGLKAIDAMIPIGRGQRELVIGDRQTGKTAILLDTIINQKGQNCICIYVACGQRRQSVVQVVETLKKYGAMDHTIVVAATASEPASMQYLAPYVGCAMGEYFRDKGMHALVCYDDLTKQAYAYRQVSLILRRPPGREAYPGDVFYLHSRLLERAAKLSDAEGGGSLTALPVIETQAGDVSGYIPTNVISITDGQIYLEPELFYAGVRPAINVGLSVSRVGGAAQIKAMKQVAGMLRLDLAQYRELAAFAQFAADLDKATRALLERGQRMVELLKQDQYVPMPVEDQIMLIFAGTQGHLDDLPVSAIKAFEQGFLSFIRSQKEDIRKEIREKKELDDTLKQKITDAILEFKKTFQP.

An ATP-binding site is contributed by 169–176; that stretch reads GDRQTGKT.

The protein belongs to the ATPase alpha/beta chains family. F-type ATPases have 2 components, CF(1) - the catalytic core - and CF(0) - the membrane proton channel. CF(1) has five subunits: alpha(3), beta(3), gamma(1), delta(1), epsilon(1). CF(0) has three main subunits: a(1), b(2) and c(9-12). The alpha and beta chains form an alternating ring which encloses part of the gamma chain. CF(1) is attached to CF(0) by a central stalk formed by the gamma and epsilon chains, while a peripheral stalk is formed by the delta and b chains.

It localises to the cell inner membrane. It carries out the reaction ATP + H2O + 4 H(+)(in) = ADP + phosphate + 5 H(+)(out). Functionally, produces ATP from ADP in the presence of a proton gradient across the membrane. The alpha chain is a regulatory subunit. This chain is ATP synthase subunit alpha, found in Thermodesulfovibrio yellowstonii (strain ATCC 51303 / DSM 11347 / YP87).